We begin with the raw amino-acid sequence, 450 residues long: ATP-dependent protease ATPase subunit HslU (450 aa).

ATP contacts are provided by residues I18 and 60–65; that span reads GVGKTE. The span at 140–151 shows a compositional bias: polar residues; the sequence is KTSSSGWAQQQE. The tract at residues 140 to 162 is disordered; that stretch reads KTSSSGWAQQQEETPENDDQRGT. The ATP site is built by D263, E328, and R400.

Belongs to the ClpX chaperone family. HslU subfamily. In terms of assembly, a double ring-shaped homohexamer of HslV is capped on each side by a ring-shaped HslU homohexamer. The assembly of the HslU/HslV complex is dependent on binding of ATP.

It localises to the cytoplasm. In terms of biological role, ATPase subunit of a proteasome-like degradation complex; this subunit has chaperone activity. The binding of ATP and its subsequent hydrolysis by HslU are essential for unfolding of protein substrates subsequently hydrolyzed by HslV. HslU recognizes the N-terminal part of its protein substrates and unfolds these before they are guided to HslV for hydrolysis. The sequence is that of ATP-dependent protease ATPase subunit HslU from Idiomarina loihiensis (strain ATCC BAA-735 / DSM 15497 / L2-TR).